The primary structure comprises 107 residues: uncharacterized protein (107 aa).

The Glutaredoxin domain occupies 6–107; it reads KARIDQLVTA…QEMLEVALAS (102 aa). K23 provides a ligand contact to glutathione. Residue C31 coordinates [2Fe-2S] cluster. Glutathione is bound by residues R60 and 85–86; that span reads SD.

The protein belongs to the glutaredoxin family. Monothiol subfamily.

This is an uncharacterized protein from Synechocystis sp. (strain ATCC 27184 / PCC 6803 / Kazusa).